The chain runs to 328 residues: Chlorate reductase subunit beta (328 aa).

4Fe-4S ferredoxin-type domains are found at residues 6–35 (VAYV…RDGR), 125–156 (NHSF…KRPE), and 158–187 (GIVV…FNLQ). The [4Fe-4S] cluster site is built by cysteine 15, cysteine 18, cysteine 21, cysteine 25, cysteine 134, cysteine 137, and cysteine 142. 3 residues coordinate [3Fe-4S] cluster: cysteine 146, cysteine 167, and cysteine 173. Residues cysteine 177, cysteine 194, cysteine 197, cysteine 209, and cysteine 213 each contribute to the [4Fe-4S] cluster site.

As to quaternary structure, heterotrimer of alpha, beta and gamma subunits. The cofactor is [3Fe-4S] cluster. It depends on [4Fe-4S] cluster as a cofactor.

It is found in the periplasm. Functionally, electron transfer subunit of the terminal reductase during anaerobic growth on chlorate. The protein is Chlorate reductase subunit beta (clrB) of Ideonella dechloratans.